The following is a 198-amino-acid chain: Recombination protein RecR (198 aa).

The C4-type zinc finger occupies 57–72; it reads CSVCHNITDTDPCRIC. The Toprim domain maps to 80–175; it reads SVICVVQDAK…KVTRIAHGLP (96 aa).

This sequence belongs to the RecR family.

May play a role in DNA repair. It seems to be involved in an RecBC-independent recombinational process of DNA repair. It may act with RecF and RecO. This chain is Recombination protein RecR, found in Halalkalibacterium halodurans (strain ATCC BAA-125 / DSM 18197 / FERM 7344 / JCM 9153 / C-125) (Bacillus halodurans).